The primary structure comprises 122 residues: Insulin-like 3 (122 aa).

The N-terminal stretch at 1-15 is a signal peptide; it reads MRAPLLLMLLALGSA. 3 disulfide bridges follow: C29–C107, C41–C120, and C106–C111.

It belongs to the insulin family. As to quaternary structure, heterodimer of a B chain and an A chain linked by two disulfide bonds. As to expression, expressed exclusively in Leydig cells of the testis.

The protein localises to the secreted. Functionally, seems to play a role in testicular function. May be a trophic hormone with a role in testicular descent in fetal life. Is a ligand for LGR8 receptor. This is Insulin-like 3 (Insl3) from Mus musculus (Mouse).